The following is a 351-amino-acid chain: tRNA-specific 2-thiouridylase MnmA (351 aa).

Ala6–Ser13 provides a ligand contact to ATP. Catalysis depends on Cys96, which acts as the Nucleophile. A disulfide bond links Cys96 and Cys193. Gly120 lines the ATP pocket. The tract at residues Lys143 to Gln145 is interaction with tRNA. Cys193 functions as the Cysteine persulfide intermediate in the catalytic mechanism. The segment at Arg298 to Tyr299 is interaction with tRNA.

The protein belongs to the MnmA/TRMU family.

Its subcellular location is the cytoplasm. The enzyme catalyses S-sulfanyl-L-cysteinyl-[protein] + uridine(34) in tRNA + AH2 + ATP = 2-thiouridine(34) in tRNA + L-cysteinyl-[protein] + A + AMP + diphosphate + H(+). Catalyzes the 2-thiolation of uridine at the wobble position (U34) of tRNA, leading to the formation of s(2)U34. In Nitratidesulfovibrio vulgaris (strain DSM 19637 / Miyazaki F) (Desulfovibrio vulgaris), this protein is tRNA-specific 2-thiouridylase MnmA.